The primary structure comprises 740 residues: Ribosomal protein S6 kinase alpha-3 (740 aa).

Residues 1-26 form a disordered region; the sequence is MPLAQLADPWQKMAVESPSDSAENGQ. In terms of domain architecture, Protein kinase 1 spans 68–327; the sequence is FELLKVLGQG…VEEIKRHSFF (260 aa). ATP contacts are provided by residues 74 to 82 and Lys-100; that span reads LGQGSFGKV. The Proton acceptor role is filled by Asp-193. Ser-227 is subject to Phosphoserine; by PDPK1. Residues 328–397 form the AGC-kinase C-terminal domain; it reads STIDWNKLYR…VAITSDDESQ (70 aa). A Phosphothreonine modification is found at Thr-365. A phosphoserine mark is found at Ser-369 and Ser-375. Phosphoserine; by autocatalysis and MAPKAPK2 is present on Ser-386. Ser-415 bears the Phosphoserine mark. The 258-residue stretch at 422 to 679 folds into the Protein kinase 2 domain; that stretch reads YEVKEDIGVG…AALVLRHPWI (258 aa). ATP is bound by residues 428–436 and Lys-451; that span reads IGVGSYSVC. Phosphotyrosine; by FGFR3 is present on Tyr-529. Asp-539 serves as the catalytic Proton acceptor. Phosphoserine is present on residues Ser-556 and Ser-715.

Belongs to the protein kinase superfamily. AGC Ser/Thr protein kinase family. S6 kinase subfamily. Forms a complex with either MAPK1/ERK2 or MAPK3/ERK1 in quiescent cells. Transiently dissociates following mitogenic stimulation. Interacts with NFATC4, ETV1/ER81 and FGFR1. Mg(2+) is required as a cofactor. Activated by phosphorylation at Ser-227 by PDPK1. Autophosphorylated on Ser-386, as part of the activation process. May be phosphorylated at Thr-365 and Ser-369 by MAPK1/ERK2 and MAPK3/ERK1. Can also be activated via phosphorylation at Ser-386 by MAPKAPK2. In terms of processing, N-terminal myristoylation results in an activated kinase in the absence of added growth factors. In terms of tissue distribution, intestine, thymus, lung, heart and brain.

The protein resides in the nucleus. It localises to the cytoplasm. The catalysed reaction is L-seryl-[protein] + ATP = O-phospho-L-seryl-[protein] + ADP + H(+). The enzyme catalyses L-threonyl-[protein] + ATP = O-phospho-L-threonyl-[protein] + ADP + H(+). Its activity is regulated as follows. Upon extracellular signal or mitogen stimulation, phosphorylated at Thr-577 in the C-terminal kinase domain (CTKD) by MAPK1/ERK2 and MAPK3/ERK1. The activated CTKD then autophosphorylates Ser-386, allowing binding of PDPK1, which in turn phosphorylates Ser-227 in the N-terminal kinase domain (NTDK) leading to the full activation of the protein and subsequent phosphorylation of the substrates by the NTKD. In terms of biological role, serine/threonine-protein kinase that acts downstream of ERK (MAPK1/ERK2 and MAPK3/ERK1) signaling and mediates mitogenic and stress-induced activation of the transcription factors CREB1, ETV1/ER81 and NR4A1/NUR77, regulates translation through RPS6 and EIF4B phosphorylation, and mediates cellular proliferation, survival, and differentiation by modulating mTOR signaling and repressing pro-apoptotic function of BAD and DAPK1. In fibroblast, is required for EGF-stimulated phosphorylation of CREB1 and histone H3 at 'Ser-10', which results in the subsequent transcriptional activation of several immediate-early genes. In response to mitogenic stimulation (EGF and PMA), phosphorylates and activates NR4A1/NUR77 and ETV1/ER81 transcription factors and the cofactor CREBBP. Upon insulin-derived signal, acts indirectly on the transcription regulation of several genes by phosphorylating GSK3B at 'Ser-9' and inhibiting its activity. Phosphorylates RPS6 in response to serum or EGF via an mTOR-independent mechanism and promotes translation initiation by facilitating assembly of the preinitiation complex. In response to insulin, phosphorylates EIF4B, enhancing EIF4B affinity for the EIF3 complex and stimulating cap-dependent translation. Is involved in the mTOR nutrient-sensing pathway by directly phosphorylating TSC2 at 'Ser-1798', which potently inhibits TSC2 ability to suppress mTOR signaling, and mediates phosphorylation of RPTOR, which regulates mTORC1 activity and may promote rapamycin-sensitive signaling independently of the PI3K/AKT pathway. Mediates cell survival by phosphorylating the pro-apoptotic proteins BAD and DAPK1 and suppressing their pro-apoptotic function. Promotes the survival of hepatic stellate cells by phosphorylating CEBPB in response to the hepatotoxin carbon tetrachloride (CCl4). Is involved in cell cycle regulation by phosphorylating the CDK inhibitor CDKN1B, which promotes CDKN1B association with 14-3-3 proteins and prevents its translocation to the nucleus and inhibition of G1 progression. In LPS-stimulated dendritic cells, is involved in TLR4-induced macropinocytosis, and in myeloma cells, acts as effector of FGFR3-mediated transformation signaling, after direct phosphorylation at Tyr-529 by FGFR3. Negatively regulates EGF-induced MAPK1/3 phosphorylation via phosphorylation of SOS1. Phosphorylates SOS1 at 'Ser-1134' and 'Ser-1161' that create YWHAB and YWHAE binding sites and which contribute to the negative regulation of MAPK1/3 phosphorylation. Phosphorylates EPHA2 at 'Ser-897', the RPS6KA-EPHA2 signaling pathway controls cell migration. Acts as a regulator of osteoblast differentiation by mediating phosphorylation of ATF4, thereby promoting ATF4 transactivation activity. The sequence is that of Ribosomal protein S6 kinase alpha-3 (Rps6ka3) from Mus musculus (Mouse).